The chain runs to 248 residues: Triosephosphate isomerase (248 aa).

D-glyceraldehyde 3-phosphate-binding residues include Asn10 and Lys12. His95 acts as the Electrophile in catalysis. Glu165 (proton acceptor) is an active-site residue. Residues Gly171, Leu230, and 232 to 233 (GN) contribute to the D-glyceraldehyde 3-phosphate site.

Belongs to the triosephosphate isomerase family. In terms of assembly, homodimer.

The enzyme catalyses D-glyceraldehyde 3-phosphate = dihydroxyacetone phosphate. It participates in carbohydrate biosynthesis; gluconeogenesis. It functions in the pathway carbohydrate degradation; glycolysis; D-glyceraldehyde 3-phosphate from glycerone phosphate: step 1/1. Functionally, catalyzes the interconversion of glyceraldehyde 3-phosphate and dihydroxyacetone phosphate in the glycolytic and gluconeogenic pathways. This is Triosephosphate isomerase from Plasmodium falciparum (isolate 3D7).